The primary structure comprises 125 residues: Small ribosomal subunit protein uS12 (125 aa).

Residues 1 to 27 (MPTINQLVRKGREKGEQKSTAPALKSC) form a disordered region. Position 89 is a 3-methylthioaspartic acid (Asp89). The tract at residues 103–125 (DASGVQKRNQGRSKYGTKRPKKK) is disordered. Basic residues predominate over residues 111 to 125 (NQGRSKYGTKRPKKK).

Belongs to the universal ribosomal protein uS12 family. Part of the 30S ribosomal subunit. Contacts proteins S8 and S17. May interact with IF1 in the 30S initiation complex.

In terms of biological role, with S4 and S5 plays an important role in translational accuracy. Its function is as follows. Interacts with and stabilizes bases of the 16S rRNA that are involved in tRNA selection in the A site and with the mRNA backbone. Located at the interface of the 30S and 50S subunits, it traverses the body of the 30S subunit contacting proteins on the other side and probably holding the rRNA structure together. The combined cluster of proteins S8, S12 and S17 appears to hold together the shoulder and platform of the 30S subunit. This Syntrophomonas wolfei subsp. wolfei (strain DSM 2245B / Goettingen) protein is Small ribosomal subunit protein uS12.